Here is a 299-residue protein sequence, read N- to C-terminus: Probable lipid kinase YegS (299 aa).

In terms of domain architecture, DAGKc spans 2 to 133 (ANFPASLLIL…IDMAMVNDKT (132 aa)). ATP contacts are provided by residues threonine 40, 66–72 (GDGTINE), and threonine 95. Mg(2+) contacts are provided by leucine 215, aspartate 218, and leucine 220. The active-site Proton acceptor is the glutamate 271.

Belongs to the diacylglycerol/lipid kinase family. YegS lipid kinase subfamily. Mg(2+) serves as cofactor. The cofactor is Ca(2+).

The protein resides in the cytoplasm. Functionally, probably phosphorylates lipids; the in vivo substrate is unknown. The polypeptide is Probable lipid kinase YegS (Salmonella choleraesuis (strain SC-B67)).